A 368-amino-acid polypeptide reads, in one-letter code: uncharacterized protein (368 aa).

Residues 1–19 (MHVSMIIFVSIFSIKYIMA) form the signal peptide. N-linked (GlcNAc...) asparagine; by host glycans are attached at residues Asn-99, Asn-170, Asn-266, and Asn-295.

This is an uncharacterized protein from Ostreid herpesvirus 1 (isolate France) (OsHV-1).